The chain runs to 375 residues: MAISATTQSALVGGSQDDIILSTSAPIPQRLEDDQVAVAVKAIALNPVDTKMLGDFHTPGAVLGCEFSGVITSAGPVATSEWGLREGDRVSGAIMGMNPLRPQIGAFAQHTVAPAHVVLKVREDWDFAQGAGMGNAWYTSGWALFHTMGLPAGPQLEPLHTLVPPPPGNAGKLPSTNKPITVLVSGGSSSTGTTAVQLLKLAGYHVIATCSARNFDLARQYGADEVFDHSSPTCAADIRERTRNALRFALDCITTPETTRLCYAALGRSGGRYVSLDPFSEAVAATRGVVRPDWVLGPELVGEDIAWPEPHGRKGNPKARVFCEAWTRTLQRLVDQGLVKTHPQLVRDTGLKGALGGLDDIRAKKVSGQKLVYLL.

48–51 (VDTK) lines the NADP(+) pocket. 135-142 (NAWYTSGW) contacts substrate. NADP(+) is bound by residues 188–191 (SSST), 211–214 (SARN), and 276–277 (LD). 297 to 301 (GPELV) is a substrate binding site. An NADP(+)-binding site is contributed by 366 to 367 (VS).

This sequence belongs to the zinc-containing alcohol dehydrogenase family. In terms of assembly, monomer.

It carries out the reaction (2S,4S)-4-hydroxy-4-methylglutamate + 8 malonyl-CoA + 3 S-adenosyl-L-methionine + ATP + 8 NADPH + 11 H(+) = (2S)-3-[(2S)-3,5-dioxo-4-[(2E,4R,6R,8E,10E,12E)-4,6,12-trimethyltetradeca-2,8,10,12-tetraenoyl]pyrrolidin-2-yl]-2-hydroxy-2-methylpropanoate + AMP + 3 S-adenosyl-L-homocysteine + 8 CO2 + diphosphate + 8 NADP(+) + 8 CoA + 6 H2O. It functions in the pathway secondary metabolite biosynthesis. Functionally, trans-enoyl reductase; part of the gene cluster that mediates the biosynthesis of the tetramic acid Sch210972, a potential anti-HIV fungal natural product that contains a decalin core. The PKS module of cghG together with the enoylreductase cghC catalyze the formation of the polyketide unit which is then conjugated to 4-hydroxyl-4-methyl glutamate (HMG) by the condensation domain of the cghG NRPS module. One unique structural feature of Sch210972 is the tetramic acid motif proposed to be derived from the non-proteinogenic amino acid HMG, by a Dieckmann-type condensation catalyzed by the reductase domain of cghG. The aldolase cghB catalyzes the aldol condensation of 2 molecules of pyruvic acid to yield the intermediate 4-hydroxyl-4-methyl-2-oxoglutarate (HMOG), which can then be stereoselectively transaminated by an unidentified enzyme to form HMG. The Diels-Alderase cghA then uses the Dieckmann product released by cghG as substrate and catalyzes the Diels-Alder cycloaddition to form the decalin ring of Sch210972. CghA also suppresses the nonenzymatic formation of the alternative stereoisomer. The sequence is that of Trans-enoyl reductase cghC from Chaetomium globosum (strain ATCC 6205 / CBS 148.51 / DSM 1962 / NBRC 6347 / NRRL 1970) (Soil fungus).